The primary structure comprises 143 residues: Peptide methionine sulfoxide reductase MsrB (143 aa).

Positions 16–139 (DAELRRRLTP…NSAALNFEAK (124 aa)) constitute a MsrB domain. Zn(2+) contacts are provided by Cys-55, Cys-58, Cys-104, and Cys-107. The Nucleophile role is filled by Cys-128.

The protein belongs to the MsrB Met sulfoxide reductase family. It depends on Zn(2+) as a cofactor.

The enzyme catalyses L-methionyl-[protein] + [thioredoxin]-disulfide + H2O = L-methionyl-(R)-S-oxide-[protein] + [thioredoxin]-dithiol. This chain is Peptide methionine sulfoxide reductase MsrB, found in Burkholderia thailandensis (strain ATCC 700388 / DSM 13276 / CCUG 48851 / CIP 106301 / E264).